Consider the following 437-residue polypeptide: tRNA(Ile2) 2-agmatinylcytidine synthetase TiaS (437 aa).

This sequence belongs to the TiaS family.

The protein localises to the cytoplasm. The enzyme catalyses cytidine(34) in tRNA(Ile2) + agmatine + ATP + H2O = 2-agmatinylcytidine(34) in tRNA(Ile2) + AMP + 2 phosphate + 2 H(+). Functionally, ATP-dependent agmatine transferase that catalyzes the formation of 2-agmatinylcytidine (agm2C) at the wobble position (C34) of tRNA(Ile2), converting the codon specificity from AUG to AUA. The sequence is that of tRNA(Ile2) 2-agmatinylcytidine synthetase TiaS from Thermoplasma volcanium (strain ATCC 51530 / DSM 4299 / JCM 9571 / NBRC 15438 / GSS1).